A 230-amino-acid chain; its full sequence is MASLGLQLVGYILGLLGLLGTLVAMLLPSWRTSSYVGTSIVTAVGFSKGLWMECATHSTGITQCDIYSTLLGLPADIQAAQAMMVTSSAISSLACIVSVVGMRCTVFCQDSRAKDRLAVVGGVFFIIGGLLGFIPVAWNLHGILRDFYSPLVPDSMKFEIGEALYLGIISSLFSLVAGIILCFSCPLQGNRSDYYDSYQAQPLATRGSPRPGQPPKAKSEFNSYSLTGYV.

Over 1 to 7 (MASLGLQ) the chain is Cytoplasmic. The chain crosses the membrane as a helical span at residues 8–28 (LVGYILGLLGLLGTLVAMLLP). Residues 29 to 81 (SWRTSSYVGTSIVTAVGFSKGLWMECATHSTGITQCDIYSTLLGLPADIQAAQ) lie on the Extracellular side of the membrane. Cysteines 54 and 64 form a disulfide. The helical transmembrane segment at 82 to 102 (AMMVTSSAISSLACIVSVVGM) threads the bilayer. The Cytoplasmic portion of the chain corresponds to 103–116 (RCTVFCQDSRAKDR). The helical transmembrane segment at 117 to 137 (LAVVGGVFFIIGGLLGFIPVA) threads the bilayer. At 138–162 (WNLHGILRDFYSPLVPDSMKFEIGE) the chain is on the extracellular side. The chain crosses the membrane as a helical span at residues 163 to 183 (ALYLGIISSLFSLVAGIILCF). Residues 184–230 (SCPLQGNRSDYYDSYQAQPLATRGSPRPGQPPKAKSEFNSYSLTGYV) lie on the Cytoplasmic side of the membrane. The tract at residues 205-230 (TRGSPRPGQPPKAKSEFNSYSLTGYV) is disordered. Lys-218 is covalently cross-linked (Glycyl lysine isopeptide (Lys-Gly) (interchain with G-Cter in SUMO)). Phosphoserine is present on residues Ser-219 and Ser-223. Residues 220–230 (EFNSYSLTGYV) show a composition bias toward polar residues. The segment at 229–230 (YV) is interaction with TJP1, TJP2 and TJP3.

The protein belongs to the claudin family. In terms of assembly, can form homo- and heteropolymers with other claudins to mediate paracellular barrier and channel functions of tight junctions in response to physiological stimuli. Homopolymers interact with CLDN3, but not CLDN1, homopolymers. Directly interacts with TJP1/ZO-1, TJP2/ZO-2 and TJP3/ZO-3. Post-translationally, the disulfide bond is necessary for pore formation, but is not required for correct protein trafficking.

The protein resides in the cell junction. It is found in the tight junction. It localises to the cell membrane. The enzyme catalyses Na(+)(in) = Na(+)(out). The catalysed reaction is K(+)(in) = K(+)(out). It carries out the reaction Rb(+)(in) = Rb(+)(out). It catalyses the reaction Li(+)(in) = Li(+)(out). The enzyme catalyses Cs(+)(in) = Cs(+)(out). The catalysed reaction is Ca(2+)(in) = Ca(2+)(out). It carries out the reaction methylamine(out) = methylamine(in). It catalyses the reaction choline(out) = choline(in). The enzyme catalyses H2O(in) = H2O(out). Functionally, forms paracellular channels: polymerizes in tight junction strands with cation- and water-selective channels through the strands, conveying epithelial permeability in a process known as paracellular tight junction permeability. In intestinal epithelium, allows for sodium and water fluxes from the peritoneal side to the lumen of the intestine to regulate nutrient absorption and clear enteric pathogens as part of mucosal immune response. In kidney, allows passive sodium and calcium reabsorption across proximal tubules from the lumen back to the bloodstream. In the hepatobiliary tract, allows paracellular water and cation fluxes in the hepatic perivenous areas and biliary epithelium to generate bile flow and maintain osmotic gradients. The polypeptide is Claudin-2 (CLDN2) (Canis lupus familiaris (Dog)).